A 193-amino-acid chain; its full sequence is MSLVPYVIEQTSRGERSYDIYSRLLKDRVIFLGEEVNDTTASLVVAQLLFLESEDPDKDIYLYINSPGGSITSGMAIYDTMQYVKPDVSTICIGMAASMGSFLLTAGAPGKRFALPNSEIMIHQPLGGFKGQATDIGIHAQRILEIKKKLNSIYSERTGKPIEVIEKDTDRDHFLSAEEAKEYGLIDEVITKH.

The Nucleophile role is filled by serine 98. Residue histidine 123 is part of the active site.

It belongs to the peptidase S14 family. In terms of assembly, fourteen ClpP subunits assemble into 2 heptameric rings which stack back to back to give a disk-like structure with a central cavity, resembling the structure of eukaryotic proteasomes.

It localises to the cytoplasm. The enzyme catalyses Hydrolysis of proteins to small peptides in the presence of ATP and magnesium. alpha-casein is the usual test substrate. In the absence of ATP, only oligopeptides shorter than five residues are hydrolyzed (such as succinyl-Leu-Tyr-|-NHMec, and Leu-Tyr-Leu-|-Tyr-Trp, in which cleavage of the -Tyr-|-Leu- and -Tyr-|-Trp bonds also occurs).. Cleaves peptides in various proteins in a process that requires ATP hydrolysis. Has a chymotrypsin-like activity. Plays a major role in the degradation of misfolded proteins. In Clostridium acetobutylicum (strain ATCC 824 / DSM 792 / JCM 1419 / IAM 19013 / LMG 5710 / NBRC 13948 / NRRL B-527 / VKM B-1787 / 2291 / W), this protein is ATP-dependent Clp protease proteolytic subunit.